The primary structure comprises 325 residues: dITP/XTP pyrophosphatase (325 aa).

Residues 1–128 (MKEKIYEYKD…KKVSELGDTI (128 aa)) form a unknown region. Positions 129–324 (LIATRNEGKT…MEVFPAWQNA (196 aa)) are NTP pyrophosphatase. 132–137 (TRNEGK) is a substrate binding site. Glu-165 and Asp-194 together coordinate Mg(2+). Asp-194 serves as the catalytic Proton acceptor. Substrate is bound by residues Ser-195, 278–281 (FGYD), Lys-301, and 306–307 (HR).

Belongs to the HAM1 NTPase family. In terms of assembly, homodimer. Mg(2+) is required as a cofactor.

It catalyses the reaction XTP + H2O = XMP + diphosphate + H(+). The enzyme catalyses dITP + H2O = dIMP + diphosphate + H(+). The catalysed reaction is ITP + H2O = IMP + diphosphate + H(+). Its function is as follows. Pyrophosphatase that catalyzes the hydrolysis of nucleoside triphosphates to their monophosphate derivatives, with a high preference for the non-canonical purine nucleotides XTP (xanthosine triphosphate), dITP (deoxyinosine triphosphate) and ITP. Seems to function as a house-cleaning enzyme that removes non-canonical purine nucleotides from the nucleotide pool, thus preventing their incorporation into DNA/RNA and avoiding chromosomal lesions. The chain is dITP/XTP pyrophosphatase from Streptococcus mutans serotype c (strain ATCC 700610 / UA159).